Reading from the N-terminus, the 172-residue chain is 3-hydroxydecanoyl-[acyl-carrier-protein] dehydratase (172 aa).

Histidine 71 is a catalytic residue.

It belongs to the thioester dehydratase family. FabA subfamily. As to quaternary structure, homodimer.

The protein localises to the cytoplasm. It catalyses the reaction a (3R)-hydroxyacyl-[ACP] = a (2E)-enoyl-[ACP] + H2O. The catalysed reaction is (3R)-hydroxydecanoyl-[ACP] = (2E)-decenoyl-[ACP] + H2O. The enzyme catalyses (2E)-decenoyl-[ACP] = (3Z)-decenoyl-[ACP]. It participates in lipid metabolism; fatty acid biosynthesis. Its function is as follows. Necessary for the introduction of cis unsaturation into fatty acids. Catalyzes the dehydration of (3R)-3-hydroxydecanoyl-ACP to E-(2)-decenoyl-ACP and then its isomerization to Z-(3)-decenoyl-ACP. Can catalyze the dehydratase reaction for beta-hydroxyacyl-ACPs with saturated chain lengths up to 16:0, being most active on intermediate chain length. This chain is 3-hydroxydecanoyl-[acyl-carrier-protein] dehydratase, found in Salmonella arizonae (strain ATCC BAA-731 / CDC346-86 / RSK2980).